The primary structure comprises 245 residues: Carboxy-S-adenosyl-L-methionine synthase (245 aa).

Residues Tyr42, 67-69, 92-93, 120-121, Asn135, and Arg202 each bind S-adenosyl-L-methionine; these read GCS, DN, and DI.

It belongs to the class I-like SAM-binding methyltransferase superfamily. Cx-SAM synthase family. In terms of assembly, homodimer.

The catalysed reaction is prephenate + S-adenosyl-L-methionine = carboxy-S-adenosyl-L-methionine + 3-phenylpyruvate + H2O. Its function is as follows. Catalyzes the conversion of S-adenosyl-L-methionine (SAM) to carboxy-S-adenosyl-L-methionine (Cx-SAM). The polypeptide is Carboxy-S-adenosyl-L-methionine synthase (Vibrio vulnificus (strain CMCP6)).